Reading from the N-terminus, the 249-residue chain is Fatty acid elongase 5 (249 aa).

The next 3 helical transmembrane spans lie at 23–43 (VFVN…VIVL), 68–88 (VALS…GVFN), and 100–120 (WIFV…FIVL). A HxxHH motif motif is present at residues 131–135 (HIYHH). His134 functions as the Nucleophile in the catalytic mechanism. The next 4 membrane-spanning stretches (helical) occupy residues 138 to 158 (IGFI…AFFG), 159 to 179 (AWIN…TSLG), 193 to 213 (MIQF…HSPI), and 217 to 236 (WAVL…MRFY).

It belongs to the ELO family.

It is found in the membrane. It carries out the reaction an acyl-CoA + malonyl-CoA + H(+) = a 3-oxoacyl-CoA + CO2 + CoA. It participates in lipid metabolism; polyunsaturated fatty acid biosynthesis. Functionally, involved in the synthesis of fatty acids. Elongates C20 polyunsaturated fatty acids (PUFAs) with a preference for n-6 PUFAs. The protein is Fatty acid elongase 5 of Leishmania major.